Here is a 71-residue protein sequence, read N- to C-terminus: NAD(P)H-quinone oxidoreductase subunit O (71 aa).

The protein belongs to the complex I NdhO subunit family. As to quaternary structure, NDH-1 can be composed of about 15 different subunits; different subcomplexes with different compositions have been identified which probably have different functions.

Its subcellular location is the cellular thylakoid membrane. The enzyme catalyses a plastoquinone + NADH + (n+1) H(+)(in) = a plastoquinol + NAD(+) + n H(+)(out). The catalysed reaction is a plastoquinone + NADPH + (n+1) H(+)(in) = a plastoquinol + NADP(+) + n H(+)(out). In terms of biological role, NDH-1 shuttles electrons from an unknown electron donor, via FMN and iron-sulfur (Fe-S) centers, to quinones in the respiratory and/or the photosynthetic chain. The immediate electron acceptor for the enzyme in this species is believed to be plastoquinone. Couples the redox reaction to proton translocation, and thus conserves the redox energy in a proton gradient. Cyanobacterial NDH-1 also plays a role in inorganic carbon-concentration. This Microcystis aeruginosa (strain NIES-843 / IAM M-2473) protein is NAD(P)H-quinone oxidoreductase subunit O.